Reading from the N-terminus, the 320-residue chain is Olfactory receptor 51E2 (320 aa).

Residues 1–24 (MSSCNFTHATFVLIGIPGLEKAHF) are Extracellular-facing. Asparagine 5 carries an N-linked (GlcNAc...) asparagine glycan. A helical membrane pass occupies residues 25–45 (WVGFPLLSMYVVAMFGNCIVV). The Cytoplasmic segment spans residues 46–53 (FIVRTERS). A helical membrane pass occupies residues 54–74 (LHAPMYLFLCMLAAIDLALST). Residues 75–98 (STMPKILALFWFDSREISFEACLT) lie on the Extracellular side of the membrane. Cysteine 96 and cysteine 178 are joined by a disulfide. A helical membrane pass occupies residues 99–119 (QMFFIHALSAIESTILLAMAF). Residues 120–138 (DRYVAICHPLRHAAVLNNT) lie on the Cytoplasmic side of the membrane. The helical transmembrane segment at 139–159 (VTAQIGIVAVVRGSLFFFPLP) threads the bilayer. The Extracellular portion of the chain corresponds to 160–195 (LLIKRLAFCHSNVLSHSYCVHQDVMKLAYADTLPNV). The helical transmembrane segment at 196–216 (VYGLTAILLVMGVDVMFISLS) threads the bilayer. Over 217-236 (YFLIIRTVLQLPSKSERAKA) the chain is Cytoplasmic. The helical transmembrane segment at 237–257 (FGTCVSHIGVVLAFYVPLIGL) threads the bilayer. The Extracellular portion of the chain corresponds to 258–272 (SVVHRFGNSLHPIVR). Residues 273 to 293 (VVMGDIYLLLPPVINPIIYGA) form a helical membrane-spanning segment. At 294-320 (KTKQIRTRVLAMFKISCDKDLQAVGGK) the chain is on the cytoplasmic side.

The protein belongs to the G-protein coupled receptor 1 family. As to expression, highly expressed in the prostate. Also expressed in spleen, liver, olfactory epithelium, retinal pigment epithelium and medulla oblongata. In the retinal pigment epithelium expression is restricted to the pigment cells and choroid (at protein level). Expressed in epidermal melanocytes (at protein level).

The protein localises to the cell membrane. It localises to the early endosome membrane. In terms of biological role, olfactory receptor. Activated by the odorant, beta-ionone, a synthetic terpenoid. The activity of this receptor is probably mediated by G-proteins leading to the elevation of intracellular Ca(2+), cAMP and activation of the protein kinases PKA and MAPK3/MAPK1. Stimulation of OR51E2 by beta-ionone affects melanocyte proliferation, differentiation, and melanogenesis. Activation of OR51E2 by beta-ionone increases proliferation and migration of primary retinal pigment epithelial (RPE) cells. Activated also by the short-chain fatty acids (SCFA) acetate and propionate. In response to SCFA, may positively regulate renin secretion and increase blood pressure. May also be activated by steroid hormones and regulate cell proliferation. Activated by L-lactate in glomus cells. The sequence is that of Olfactory receptor 51E2 from Homo sapiens (Human).